Here is a 284-residue protein sequence, read N- to C-terminus: Nucleoid occlusion protein (284 aa).

The segment at residues 143–162 is a DNA-binding region (H-T-H motif); it reads EALAQRVGKSQSAIANKMRL.

It belongs to the ParB family.

Its subcellular location is the cytoplasm. It localises to the nucleoid. Functionally, effects nucleoid occlusion by binding relatively nonspecifically to DNA and preventing the assembly of the division machinery in the vicinity of the nucleoid, especially under conditions that disturb the cell cycle. It helps to coordinate cell division and chromosome segregation by preventing the formation of the Z ring through the nucleoid, which would cause chromosome breakage. The sequence is that of Nucleoid occlusion protein from Listeria monocytogenes serovar 1/2a (strain ATCC BAA-679 / EGD-e).